Reading from the N-terminus, the 838-residue chain is V-type proton ATPase 116 kDa subunit a 1 (838 aa).

At 1 to 388 (MGELFRSEEM…DAYGIGTYRE (388 aa)) the chain is on the cytoplasmic side. A phosphothreonine mark is found at T250 and T360. Y364 is subject to Phosphotyrosine. The helical transmembrane segment at 389-407 (INPAPYTVITFPFLFAVMF) threads the bilayer. At 408–409 (GD) the chain is on the vacuolar side. The helical transmembrane segment at 410–426 (FGHGILMTLFAVWMVLR) threads the bilayer. Residues 427-441 (ESRILSQKNENEMFS) lie on the Cytoplasmic side of the membrane. A helical transmembrane segment spans residues 442–471 (MVFSGRYIILLMGLFSIYTGLIYNDCFSKS). Residues 472 to 535 (LNIFGSSWSV…ATNKLTFLNS (64 aa)) lie on the Vacuolar side of the membrane. Residues 536–555 (FKMKMSVILGIIHMLFGVSL) form a helical membrane-spanning segment. At 556–573 (SLFNHIYFKKPLNIYFGF) the chain is on the cytoplasmic side. A helical transmembrane segment spans residues 574–594 (IPEIIFMSSLFGYLVILIFYK). Residues 595-639 (WTAYDAHSSRNAPSLLIHFINMFLFSYPESGNAMLYSGQKGIQCF) are Vacuolar-facing. The chain crosses the membrane as a helical span at residues 640–659 (LIVVAMLCVPWMLLFKPLIL). At 660-725 (RHQYLRKKHL…DTMVHQAIHT (66 aa)) the chain is on the cytoplasmic side. A helical transmembrane segment spans residues 726 to 750 (IEYCLGCISNTASYLRLWALSLAHA). At 751-771 (QLSEVLWTMVIHIGLHVRSLA) the chain is on the vacuolar side. Residues 772–810 (GGLGLFFIFAAFATLTVAILLIMEGLSAFLHALRLHWVE) form a helical membrane-spanning segment. Residues 811–838 (FQNKFYTGTGFKFLPFSFEHIREGKFDE) are Cytoplasmic-facing.

Belongs to the V-ATPase 116 kDa subunit family. V-ATPase is a heteromultimeric enzyme made up of two complexes: the ATP-hydrolytic V1 complex and the proton translocation V0 complex. The V1 complex consists of three catalytic AB heterodimers that form a heterohexamer, three peripheral stalks each consisting of EG heterodimers, one central rotor including subunits D and F, and the regulatory subunits C and H. The proton translocation complex V0 consists of the proton transport subunit a, a ring of proteolipid subunits c9c'', rotary subunit d, subunits e and f, and the accessory subunits ATP6AP1/Ac45 and ATP6AP2/PRR. Interacts with SPAAR. In terms of tissue distribution, expressed in brain (at protein level). Expressed in heart, kidney, liver, spleen, and to a lesser extent in brain.

It is found in the cytoplasmic vesicle. It localises to the clathrin-coated vesicle membrane. The protein localises to the secretory vesicle. Its subcellular location is the synaptic vesicle membrane. The protein resides in the melanosome. Its function is as follows. Subunit of the V0 complex of vacuolar(H+)-ATPase (V-ATPase), a multisubunit enzyme composed of a peripheral complex (V1) that hydrolyzes ATP and a membrane integral complex (V0) that translocates protons. V-ATPase is responsible for the acidification of various organelles, such as lysosomes, endosomes, the trans-Golgi network, and secretory granules, including synaptic vesicles. In certain cell types, can be exported to the plasma membrane, where it is involved in the acidification of the extracellular environment. Required for assembly and activity of the vacuolar ATPase. Through its action on compartment acidification, plays an essential role in neuronal development in terms of integrity and connectivity of neurons. This chain is V-type proton ATPase 116 kDa subunit a 1 (Atp6v0a1), found in Rattus norvegicus (Rat).